A 164-amino-acid chain; its full sequence is 5-formyltetrahydrofolate cyclo-ligase (164 aa).

3–7 (KNALR) contributes to the ATP binding site. Residues Glu50 and Glu55 each coordinate substrate. 115-123 (RLGFGKGYY) contributes to the ATP binding site. Asp124 is a Mg(2+) binding site. 2 residues coordinate ATP: Arg125 and Trp153. Asp154 contacts Mg(2+).

Belongs to the 5-formyltetrahydrofolate cyclo-ligase family. In terms of assembly, monomer or homodimer. Requires Mg(2+) as cofactor. The cofactor is Mn(2+). Ca(2+) serves as cofactor. Zn(2+) is required as a cofactor. It depends on Fe(2+) as a cofactor. Requires Co(2+) as cofactor. The cofactor is Cu(2+).

The protein localises to the cytoplasm. It carries out the reaction (6S)-5-formyl-5,6,7,8-tetrahydrofolate + ATP = (6R)-5,10-methenyltetrahydrofolate + ADP + phosphate. Functionally, involved in folate metabolism. Catalyzes the irreversible conversion of 5-formyltetrahydrofolate (5-FTHF) to yield 5,10-methenyltetrahydrofolate. The sequence is that of 5-formyltetrahydrofolate cyclo-ligase from Mycoplasma pneumoniae (strain ATCC 29342 / M129 / Subtype 1) (Mycoplasmoides pneumoniae).